A 150-amino-acid polypeptide reads, in one-letter code: Large ribosomal subunit protein bL9 (150 aa).

The protein belongs to the bacterial ribosomal protein bL9 family.

Functionally, binds to the 23S rRNA. The sequence is that of Large ribosomal subunit protein bL9 from Enterococcus faecalis (strain ATCC 700802 / V583).